The chain runs to 1614 residues: Protein scribble homolog (1614 aa).

Residues 1–809 (MLKCIPLWRC…MRLWRERMVE (809 aa)) are sufficient for targeting to adherens junction and to inhibit cell proliferation. LRR repeat units lie at residues 11-34 (NRHV…IYRY), 35-58 (SRSL…FFRL), 59-81 (LNLR…VANF), 83-105 (QLVE…KFCK), 107-127 (LEIA…FTQL), 128-150 (RSLA…VGNL), 151-173 (ANLV…LSFL), 174-196 (VKLE…LGAL), 197-219 (PNLR…LGNL), 221-242 (RLVC…LGGL), 243-265 (LLLT…IGQL), 267-288 (QLSI…IGDC), 289-311 (ENLS…LGKL), 312-334 (TKLT…IGGC), 336-357 (ALSV…LAHT), 359-380 (ELHV…LTHL), and 382-405 (LKAL…DDAQ). The residue at position 37 (Ser37) is a Phosphoserine. Thr378 carries the post-translational modification Phosphothreonine. Disordered stretches follow at residues 417 to 441 (PQQP…SDAP), 462 to 608 (GAAA…RLIR), and 636 to 692 (AQPD…VVSA). A compositionally biased stretch (polar residues) spans 428–437 (GLQSSPSESW). Thr475 is modified (phosphothreonine). Residues 479–494 (SELKVMKRGVEERRGE) show a composition bias toward basic and acidic residues. Residues 516 to 533 (TESGLSEDSQPSTGTASQ) show a composition bias toward polar residues. The segment covering 548–557 (QQEAAPNAQE) has biased composition (low complexity). Over residues 662 to 686 (EEEDEEDEEEDEEEEEVAVAEEDKE) the composition is skewed to acidic residues. Residues 664 to 691 (EDEEDEEEDEEEEEVAVAEEDKEEAVVS) adopt a coiled-coil conformation. Phosphoserine is present on residues Ser699 and Ser755. Residues 708 to 1219 (IEPARIEEEE…SLESVSSIDR (512 aa)) form an interaction with ARHGEF7 region. A PDZ 1 domain is found at 719 to 806 (TLTIVRQTGG…TVQMRLWRER (88 aa)). Residues 719–1184 (TLTIVRQTGG…TVLVCDGFDT (466 aa)) are required for interaction with VIM. Position 817 is a phosphothreonine (Thr817). Ser826, Ser866, and Ser930 each carry phosphoserine. The 89-residue stretch at 853–941 (VACLVRSEKG…TIALLLEREA (89 aa)) folds into the PDZ 2 domain. The interval 940 to 971 (EAGGPLPPSPLPHSPPPPVTAPSTVVTASPGE) is disordered. Pro residues predominate over residues 944–959 (PLPPSPLPHSPPPPVT). Low complexity predominate over residues 960–969 (APSTVVTASP). PDZ domains follow at residues 994–1083 (EICL…RRDP) and 1090–1178 (ELCI…TVLV). Ser1130, Ser1210, Ser1213, Ser1216, Ser1222, Ser1260, Ser1268, and Ser1271 each carry phosphoserine. A disordered region spans residues 1214 to 1448 (VSSIDRELSP…LPDRALSPAE (235 aa)). Over residues 1217-1232 (IDRELSPEGCGKEKEP) the composition is skewed to basic and acidic residues. The residue at position 1304 (Thr1304) is a Phosphothreonine. Position 1310 is a phosphoserine (Ser1310). Basic and acidic residues predominate over residues 1315–1327 (SFRERQKYFELEV). Residue Ser1340 is modified to Phosphoserine. Positions 1341 to 1368 (LVGADDLRKMQEEEARKLQQKRAQLMRE) form a coiled coil. Over residues 1345–1357 (DDLRKMQEEEARK) the composition is skewed to basic and acidic residues. A compositionally biased stretch (acidic residues) spans 1378 to 1390 (LDGEAPDDEEPEE). The segment covering 1396–1408 (GPAAGLSPSSPQP) has biased composition (low complexity). 2 positions are modified to phosphoserine: Ser1402 and Ser1405. The span at 1418 to 1429 (AKAERRHQERLR) shows a compositional bias: basic and acidic residues. Residues Ser1432, Ser1445, and Ser1467 each carry the phosphoserine modification. The tract at residues 1476-1524 (QMVLSKSQEGRSRRGPLERLAEAPSPAPTPSPTPVEDLGLQTSTSPGRL) is disordered. Residues 1483-1496 (QEGRSRRGPLERLA) show a composition bias toward basic and acidic residues. Residue Ser1500 is modified to Phosphoserine. Thr1504 bears the Phosphothreonine mark. Ser1506, Ser1520, and Ser1550 each carry phosphoserine. Positions 1581-1614 (GRPSPGTVGPEEVTLCSSRRPVRPGRRGLGPVPS) are disordered.

Belongs to the LAP (LRR and PDZ) protein family. As to quaternary structure, interacts with UBE3A. Interacts with PAK1 and PAK2. Interacts (via PDZ domains) with VANGL2. Interacts (via PDZ domains) with LPP and TRIP6; the interaction is direct. Interacts (via PDZ domains) with TJP2. Interacts (via PDZ domains) with APC; may mediate APC targeting to adherens junctions of epithelial cells. Interacts (via PDZ domains) with TSHR; regulates TSHR trafficking and function. Interacts with ARHGEF7 and GIT1; interacts directly with ARHGEF7. Interacts with CTNNB1. Interacts with MAPK12. Interacts (via PDZ domains 1 and 3) with MCC. Interacts with DLG5. Interacts with STK4/MST1 and LATS1 in the presence of DLG5. Interacts (via PDZ domain 3) with CRTAM (via PDZ-binding motif); the interaction promotes CRTAM and SCRIB polarization in a subset of CD4+ T-cells. Interacts with YES1, when YES1 is in a closed conformation; the interaction facilitates YES1 autophosphorylation. Interacts (via PDZ domains) with VIM; the interaction protects SCRIB from proteasomal degradation and facilitates SCRIB localization to intermediate filaments, the interaction is reduced by cell contact inhibition. Post-translationally, ubiquitinated; targeted for UBE3A-dependent multiubiquitination and degraded. Palmitoylated. Could be depalmitoylated by LYPLA1 and/or LYPLA2. Palmitoylation of SCRIB by ZDHHC7 is required for its localization to cell-cell junctions, function in the establishement of epithelial cell polarity and the regulation of downstream signaling pathways important for epithelial cell differentiation.

The protein localises to the cell membrane. Its subcellular location is the cell junction. It is found in the adherens junction. It localises to the cell projection. The protein resides in the lamellipodium. The protein localises to the cytoplasm. Its subcellular location is the postsynapse. It is found in the presynapse. In terms of biological role, scaffold protein involved in different aspects of polarized cell differentiation regulating epithelial and neuronal morphogenesis and T-cell polarization. Via its interaction with CRTAM, required for the late phase polarization of a subset of CD4+ T-cells, which in turn regulates TCR-mediated proliferation and IFNG and IL22 production. Plays a role in cell directional movement, cell orientation, cell sheet organization and Golgi complex polarization at the cell migration front. Promotes epithelial cell layer barrier function via maintaining cell-cell adhesion. Most probably functions in the establishment of apico-basal cell polarity. May function in cell proliferation regulating progression from G1 to S phase and as a positive regulator of apoptosis for instance during acinar morphogenesis of the mammary epithelium. May regulate cell invasion via MAPK-mediated cell migration and adhesion. May play a role in exocytosis and in the targeting of synaptic vesicles to synapses. Functions as an activator of Rac GTPase activity. The sequence is that of Protein scribble homolog from Canis lupus familiaris (Dog).